The following is an 895-amino-acid chain: DNA mismatch repair protein MutS (895 aa).

607–614 (GPNMSGKS) provides a ligand contact to ATP.

This sequence belongs to the DNA mismatch repair MutS family.

In terms of biological role, this protein is involved in the repair of mismatches in DNA. It is possible that it carries out the mismatch recognition step. This protein has a weak ATPase activity. The chain is DNA mismatch repair protein MutS from Bacillus cytotoxicus (strain DSM 22905 / CIP 110041 / 391-98 / NVH 391-98).